A 193-amino-acid polypeptide reads, in one-letter code: Large ribosomal subunit protein uL18 (193 aa).

The protein belongs to the universal ribosomal protein uL18 family. As to quaternary structure, part of the 50S ribosomal subunit. Contacts the 5S and 23S rRNAs.

In terms of biological role, this is one of the proteins that bind and probably mediate the attachment of the 5S RNA into the large ribosomal subunit, where it forms part of the central protuberance. This is Large ribosomal subunit protein uL18 from Methanococcus maripaludis (strain C6 / ATCC BAA-1332).